The sequence spans 208 residues: Holliday junction resolvase RecU (208 aa).

Residues Thr-87, Asp-89, Glu-102, and Gln-121 each contribute to the Mg(2+) site.

Belongs to the RecU family. Mg(2+) serves as cofactor.

It is found in the cytoplasm. The enzyme catalyses Endonucleolytic cleavage at a junction such as a reciprocal single-stranded crossover between two homologous DNA duplexes (Holliday junction).. Functionally, endonuclease that resolves Holliday junction intermediates in genetic recombination. Cleaves mobile four-strand junctions by introducing symmetrical nicks in paired strands. Promotes annealing of linear ssDNA with homologous dsDNA. Required for DNA repair, homologous recombination and chromosome segregation. The polypeptide is Holliday junction resolvase RecU (Staphylococcus aureus (strain Mu3 / ATCC 700698)).